A 270-amino-acid polypeptide reads, in one-letter code: MNVEKLKKMKGKEKIVMVTAYDAPSARIAQDAGIDIILVGDSLGNNVLGYENTIPVTMEEMLIHVAAVRRGAPKAFVVADMPFLSYQPSLEKAIENAGRFLKVGANAVKIEGGEEFGEVVQRLVESGIPVMGHIGLTPQFVNRFGGYRVQGKTEKSREYLLRSARELEKRGAFAIVLEMVVEEVAKEITEGISIPTIGIGSGRFCDGQVLVWHDLLGLNPDFAPRFSKRYANLYETILKALQEFKKEVKEGIFPSEEHVFTDKSQGGVSS.

Mg(2+) contacts are provided by Asp41 and Asp80. 3-methyl-2-oxobutanoate contacts are provided by residues 41-42, Asp80, and Lys109; that span reads DS. Residue Glu111 participates in Mg(2+) binding. The Proton acceptor role is filled by Glu178.

This sequence belongs to the PanB family. Homodecamer; pentamer of dimers. Mg(2+) serves as cofactor.

It is found in the cytoplasm. It catalyses the reaction 3-methyl-2-oxobutanoate + (6R)-5,10-methylene-5,6,7,8-tetrahydrofolate + H2O = 2-dehydropantoate + (6S)-5,6,7,8-tetrahydrofolate. It functions in the pathway cofactor biosynthesis; (R)-pantothenate biosynthesis; (R)-pantoate from 3-methyl-2-oxobutanoate: step 1/2. Functionally, catalyzes the reversible reaction in which hydroxymethyl group from 5,10-methylenetetrahydrofolate is transferred onto alpha-ketoisovalerate to form ketopantoate. The sequence is that of 3-methyl-2-oxobutanoate hydroxymethyltransferase from Thermotoga neapolitana (strain ATCC 49049 / DSM 4359 / NBRC 107923 / NS-E).